The following is a 37-amino-acid chain: Large ribosomal subunit protein bL36c (37 aa).

Belongs to the bacterial ribosomal protein bL36 family.

It localises to the plastid. The protein resides in the chloroplast. This Populus alba (White poplar) protein is Large ribosomal subunit protein bL36c.